We begin with the raw amino-acid sequence, 444 residues long: UPF0053 protein YhdP (444 aa).

A CNNM transmembrane domain is found at 1-201; it reads MDIVNLILVA…YKSGEINQSE (201 aa). The next 3 membrane-spanning stretches (helical) occupy residues 7-27, 61-81, and 101-121; these read ILVA…FAII, ACQL…ESTI, and VISF…VGEL. 2 CBS domains span residues 220 to 282 and 284 to 344; these read MIPR…SVDS and ISQF…IRDE.

Belongs to the UPF0053 family.

The protein resides in the cell membrane. The protein is UPF0053 protein YhdP (yhdP) of Bacillus subtilis (strain 168).